A 210-amino-acid polypeptide reads, in one-letter code: dTTP/UTP pyrophosphatase (210 aa).

D85 (proton acceptor) is an active-site residue.

Belongs to the Maf family. YhdE subfamily. A divalent metal cation is required as a cofactor.

The protein localises to the cytoplasm. The catalysed reaction is dTTP + H2O = dTMP + diphosphate + H(+). The enzyme catalyses UTP + H2O = UMP + diphosphate + H(+). In terms of biological role, nucleoside triphosphate pyrophosphatase that hydrolyzes dTTP and UTP. May have a dual role in cell division arrest and in preventing the incorporation of modified nucleotides into cellular nucleic acids. In Saccharophagus degradans (strain 2-40 / ATCC 43961 / DSM 17024), this protein is dTTP/UTP pyrophosphatase.